The following is a 319-amino-acid chain: Aspartate carbamoyltransferase catalytic subunit (319 aa).

Residues Arg59 and Thr60 each contribute to the carbamoyl phosphate site. Lys87 provides a ligand contact to L-aspartate. Carbamoyl phosphate contacts are provided by Arg109, His137, and Gln140. L-aspartate contacts are provided by Arg170 and Arg224. Carbamoyl phosphate-binding residues include Gly265 and Pro266.

The protein belongs to the aspartate/ornithine carbamoyltransferase superfamily. ATCase family. In terms of assembly, heterododecamer (2C3:3R2) of six catalytic PyrB chains organized as two trimers (C3), and six regulatory PyrI chains organized as three dimers (R2).

The enzyme catalyses carbamoyl phosphate + L-aspartate = N-carbamoyl-L-aspartate + phosphate + H(+). It participates in pyrimidine metabolism; UMP biosynthesis via de novo pathway; (S)-dihydroorotate from bicarbonate: step 2/3. Catalyzes the condensation of carbamoyl phosphate and aspartate to form carbamoyl aspartate and inorganic phosphate, the committed step in the de novo pyrimidine nucleotide biosynthesis pathway. The chain is Aspartate carbamoyltransferase catalytic subunit from Gemmatimonas aurantiaca (strain DSM 14586 / JCM 11422 / NBRC 100505 / T-27).